The following is a 25-amino-acid chain: Antimicrobial peptide 2 (25 aa).

As to expression, expressed by the skin glands.

Its subcellular location is the secreted. Functionally, has very strong antibacterial activity against Gram-positive bacterium S.aureus and very weak activity against Gram-negative bacterium E.coli. This Xenopus tropicalis (Western clawed frog) protein is Antimicrobial peptide 2.